The sequence spans 245 residues: Aliphatic sulfonates import ATP-binding protein SsuB 2 (245 aa).

The ABC transporter domain occupies 15–229 (VAVRGLSRAF…DVADPEFARI (215 aa)). 47–54 (GASGCGKS) is an ATP binding site.

This sequence belongs to the ABC transporter superfamily. Aliphatic sulfonates importer (TC 3.A.1.17.2) family. The complex is composed of two ATP-binding proteins (SsuB), two transmembrane proteins (SsuC) and a solute-binding protein (SsuA).

It localises to the cell inner membrane. It carries out the reaction ATP + H2O + aliphatic sulfonate-[sulfonate-binding protein]Side 1 = ADP + phosphate + aliphatic sulfonateSide 2 + [sulfonate-binding protein]Side 1.. In terms of biological role, part of the ABC transporter complex SsuABC involved in aliphatic sulfonates import. Responsible for energy coupling to the transport system. This Paracoccus denitrificans (strain Pd 1222) protein is Aliphatic sulfonates import ATP-binding protein SsuB 2.